Consider the following 305-residue polypeptide: Alpha-N-acetylgalactosaminide alpha-2,6-sialyltransferase 3 (305 aa).

Residues methionine 1–lysine 8 lie on the Cytoplasmic side of the membrane. The helical; Signal-anchor for type II membrane protein transmembrane segment at proline 9–asparagine 29 threads the bilayer. Residues aspartate 30 to serine 305 are Lumenal-facing. A disulfide bond links cysteine 80 and cysteine 229. Residues asparagine 239 and asparagine 301 are each glycosylated (N-linked (GlcNAc...) asparagine).

This sequence belongs to the glycosyltransferase 29 family. In adults it is highly expressed in spleen, followed by kidney and lesser in lung. Not found in liver and skeletal muscle. In newborns it is abundantly expressed in brain and kidney.

It localises to the golgi apparatus membrane. It carries out the reaction an alpha-Neu5Ac-(2-&gt;3)-beta-D-Gal-(1-&gt;3)-D-GlcNAc derivative + CMP-N-acetyl-beta-neuraminate = an alpha-Neu5Ac-(2-&gt;3)-beta-D-Gal-(1-&gt;3)-[alpha-Neu5Ac-(2-&gt;6)]-D-GlcNAc derivative + CMP + H(+). The catalysed reaction is a ganglioside GM1b + CMP-N-acetyl-beta-neuraminate = a ganglioside GD1alpha + CMP + H(+). It catalyses the reaction a ganglioside GM1b (d18:1(4E)) + CMP-N-acetyl-beta-neuraminate = a ganglioside GD1alpha (d18:1(4E)) + CMP + H(+). The enzyme catalyses a globoside MSGG + CMP-N-acetyl-beta-neuraminate = a globoside DSGG + CMP + H(+). It carries out the reaction 3-O-[alpha-Neu5Ac-(2-&gt;3)-beta-D-Gal-(1-&gt;3)-alpha-D-GalNAc]-L-Ser-[protein] + CMP-N-acetyl-beta-neuraminate = a 3-O-{alpha-Neu5Ac-(2-&gt;3)-beta-D-Gal-(1-&gt;3)-[alpha-Neu5Ac-(2-&gt;6)]-alpha-D-GalNAc}-L-seryl-[protein] + CMP + H(+). The catalysed reaction is 3-O-[alpha-Neu5Ac-(2-&gt;3)-beta-D-Gal-(1-&gt;3)-alpha-D-GalNAc]-L-Thr-[protein] + CMP-N-acetyl-beta-neuraminate = a 3-O-{alpha-Neu5Ac-(2-&gt;3)-beta-D-Gal-(1-&gt;3)-[alpha-Neu5Ac-(2-&gt;6)]-alpha-D-GalNAc}-L-threonyl-[protein] + CMP + H(+). It functions in the pathway protein modification; protein glycosylation. The protein operates within glycolipid biosynthesis. In terms of biological role, transfers the sialyl group (N-acetyl-alpha-neuraminyl or NeuAc) from CMP-NeuAc to the GalNAc residue on the NeuAc-alpha-2,3-Gal-beta-1,3-GalNAc sequence of glycoproteins and glycolipids forming an alpha-2,6-linkage. Produces branched type disialyl structures by transfer of a sialyl group onto a GalNAc residue inside the backbone core chains. ST6GalNAcIII prefers glycolipids to glycoproteins, predominantly catalyzing the biosynthesis of ganglioside GD1alpha from GM1b. GD1alpha is a critical molecule in the communication and interaction between neuronal cells and their supportive cells, particularly in brain tissues, and functions as an adhesion molecule in the process of metastasis. Sialylation of glycoproteins or glycosphingolipids is very important in tumor development, neuronal development, nerve repair, immunological processes and regulation of hormone sensitivity. The protein is Alpha-N-acetylgalactosaminide alpha-2,6-sialyltransferase 3 (St6galnac3) of Rattus norvegicus (Rat).